Here is a 470-residue protein sequence, read N- to C-terminus: 6-phospho-beta-glucosidase BglB (470 aa).

E172 serves as the catalytic Proton donor. E361 acts as the Nucleophile in catalysis.

It belongs to the glycosyl hydrolase 1 family.

The enzyme catalyses 6-phospho-beta-D-glucosyl-(1-&gt;4)-D-glucose + H2O = D-glucose 6-phosphate + D-glucose. In terms of biological role, catalyzes the hydrolysis of phosphorylated beta-glucosides into glucose-6-phosphate (G-6-P) and aglycone. It has a high affinity for phosphorylated aromatic beta-glucosides (p-nitrophenyl-beta-glucoside, phenyl beta-glucoside, arbutin and phosphorylated salicin), and a low affinity for phosphorylated beta-methyl-glucoside. This Escherichia coli (strain K12) protein is 6-phospho-beta-glucosidase BglB (bglB).